The sequence spans 388 residues: GTPase Obg (388 aa).

In terms of domain architecture, Obg spans 1–159 (MKFVDEAVIK…RELRLELLLL (159 aa)). The OBG-type G domain maps to 160–333 (ADVGMLGLPN…LCYKLADFME (174 aa)). Residues 166 to 173 (GLPNAGKS), 191 to 195 (FTTLI), 213 to 216 (DIPG), 283 to 286 (NKVD), and 314 to 316 (SAV) contribute to the GTP site. Mg(2+) contacts are provided by serine 173 and threonine 193. Residues 359-380 (NQGEVITEDDDDWDDWDDEEDD) form a disordered region. Acidic residues predominate over residues 364–380 (ITEDDDDWDDWDDEEDD).

This sequence belongs to the TRAFAC class OBG-HflX-like GTPase superfamily. OBG GTPase family. Monomer. Mg(2+) serves as cofactor.

The protein resides in the cytoplasm. Functionally, an essential GTPase which binds GTP, GDP and possibly (p)ppGpp with moderate affinity, with high nucleotide exchange rates and a fairly low GTP hydrolysis rate. Plays a role in control of the cell cycle, stress response, ribosome biogenesis and in those bacteria that undergo differentiation, in morphogenesis control. The chain is GTPase Obg from Vibrio vulnificus (strain YJ016).